The following is a 254-amino-acid chain: MNADSKAPDFLVVIPARLGSTRLPRKPLADIGGKPMVIRVAERAKQSLAHSVVVATDSPEIQAACDEHRIECLLTSENHPTGTDRIAEVAQLLKLPANALVVNVQGDEPLIPPKLINQVARTLAEHEQCVISTVAVPITDAAEINNPNVVKVVLNRSGEALYFSRAPIPFVRDPQSSQKTMHLRHLGIYAYRADFLQAYTRLEPASPEQAEALEQLRALWNGYRIAVHTAPEAPPAGVDTPEDLERVRQLLARS.

It belongs to the KdsB family.

The protein localises to the cytoplasm. The enzyme catalyses 3-deoxy-alpha-D-manno-oct-2-ulosonate + CTP = CMP-3-deoxy-beta-D-manno-octulosonate + diphosphate. The protein operates within nucleotide-sugar biosynthesis; CMP-3-deoxy-D-manno-octulosonate biosynthesis; CMP-3-deoxy-D-manno-octulosonate from 3-deoxy-D-manno-octulosonate and CTP: step 1/1. It functions in the pathway bacterial outer membrane biogenesis; lipopolysaccharide biosynthesis. In terms of biological role, activates KDO (a required 8-carbon sugar) for incorporation into bacterial lipopolysaccharide in Gram-negative bacteria. This is 3-deoxy-manno-octulosonate cytidylyltransferase from Polynucleobacter necessarius subsp. necessarius (strain STIR1).